The following is a 1152-amino-acid chain: Integrin alpha-M (1152 aa).

Positions 1 to 16 (MALRVLLLTALTLCHG) are cleaved as a signal peptide. Topologically, residues 17–1104 (FNLDTENAMT…TKVEPFEVPN (1088 aa)) are extracellular. FG-GAP repeat units follow at residues 18–75 (NLDT…SCEP) and 76–135 (IRLQ…QQPQ). Cysteines 66 and 73 form a disulfide. Residue asparagine 86 is glycosylated (N-linked (GlcNAc...) asparagine). Cysteine 105 and cysteine 123 are joined by a disulfide. Residues 150 to 328 (DIAFLIDGSG…EALKTIQNQL (179 aa)) enclose the VWFA domain. Residue asparagine 240 is glycosylated (N-linked (GlcNAc...) asparagine). FG-GAP repeat units lie at residues 339 to 390 (QTGS…STFI), 391 to 442 (NMTR…TGMW), 443 to 503 (ESNA…RARW), 506 to 564 (DAVL…SGIS), and 569 to 629 (QRIA…FNPR). N-linked (GlcNAc...) asparagine glycosylation occurs at asparagine 391. Ca(2+) contacts are provided by aspartate 465, aspartate 467, asparagine 469, aspartate 473, aspartate 529, asparagine 531, aspartate 533, aspartate 537, aspartate 592, aspartate 596, and aspartate 600. Residue asparagine 469 is glycosylated (N-linked (GlcNAc...) asparagine). A disulfide bridge connects residues cysteine 654 and cysteine 711. 3 N-linked (GlcNAc...) asparagine glycosylation sites follow: asparagine 692, asparagine 696, and asparagine 734. Cysteines 770 and 776 form a disulfide. An N-linked (GlcNAc...) asparagine glycan is attached at asparagine 801. A disulfide bridge links cysteine 847 with cysteine 864. 8 N-linked (GlcNAc...) asparagine glycosylation sites follow: asparagine 880, asparagine 900, asparagine 911, asparagine 940, asparagine 946, asparagine 978, asparagine 993, and asparagine 1021. Intrachain disulfides connect cysteine 998-cysteine 1022 and cysteine 1027-cysteine 1032. Residues asparagine 1044, asparagine 1050, and asparagine 1075 are each glycosylated (N-linked (GlcNAc...) asparagine). Residues 1105–1128 (PLPLIVGSSVGGLLLLALITAALY) form a helical membrane-spanning segment. The Cytoplasmic segment spans residues 1129–1152 (KLGFFKRQYKDMMSEGGPPGAEPQ). The GFFKR motif motif lies at 1131–1135 (GFFKR).

Belongs to the integrin alpha chain family. As to quaternary structure, heterodimer of an alpha and a beta subunit. ITGAM associates with ITGB2. Found in a complex with CD177 and ITGB2/CD18. Interacts with JAM3. Interacts with THBD. Interacts with complement factor H/CFH; this interaction mediates adhesion of neutrophils to pathogens leading to pathogen clearance. Interacts with TMEM268; this interaction inhibits ITGAM degradation via the endosome-lysosome pathway. As to expression, predominantly expressed in monocytes and granulocytes. Expressed in neutrophils (at protein level).

Its subcellular location is the cell membrane. The protein localises to the membrane raft. Functionally, integrin ITGAM/ITGB2 is implicated in various adhesive interactions of monocytes, macrophages and granulocytes as well as in mediating the uptake of complement-coated particles and pathogens. It is identical with CR-3, the receptor for the iC3b fragment of the third complement component. It probably recognizes the R-G-D peptide in C3b. Integrin ITGAM/ITGB2 is also a receptor for fibrinogen, factor X and ICAM1. It recognizes P1 and P2 peptides of fibrinogen gamma chain. Regulates neutrophil migration. In association with beta subunit ITGB2/CD18, required for CD177-PRTN3-mediated activation of TNF primed neutrophils. May regulate phagocytosis-induced apoptosis in extravasated neutrophils. May play a role in mast cell development. Required with TYROBP/DAP12 in microglia to control production of microglial superoxide ions which promote the neuronal apoptosis that occurs during brain development. This Homo sapiens (Human) protein is Integrin alpha-M (ITGAM).